Consider the following 210-residue polypeptide: Regulator of G-protein signaling 17 (210 aa).

The interval 1–21 (MRKRQQSQNEGTQAVSQAPGN) is disordered. Residues 84–200 (NFDKMMKTPA…LNSQIYKAFV (117 aa)) enclose the RGS domain. Tyr137 is modified (phosphotyrosine).

As to quaternary structure, interacts with GNAI1 and GNAQ. Interacts with GNAZ and GNAI2. Interacts with OPRM1. Forms a complex with mu-opioid receptors and G(alpha)z/i2 subunits, including GNAZ and GNAI2; the formation of this complex results in mu-opioid receptor desensitization. Interacts with HINT1. Post-translationally, N- and O-glycosylated in synapsomal membranes. Serine phosphorylated in synapsomal membranes. In terms of processing, sumoylated with SUMO1 and SUM02 in synaptosomes. The sumoylated forms act as a scaffold for sequestering mu-opioid receptor-activated G(alpha) subunits. Desumoylated by HINT1. As to expression, detected in brain (at protein level). Highly expressed in the hypothalamus, periaqueductal gray matter, and pons-medulla. Lower levels in the thalamus, cortex and spinal cord. Weak expression in the striatum and cerebellum.

The protein resides in the membrane. It is found in the synapse. Its subcellular location is the synaptosome. The protein localises to the nucleus. It localises to the cytoplasm. In terms of biological role, regulates G protein-coupled receptor signaling cascades, including signaling via muscarinic acetylcholine receptor CHRM2 and dopamine receptor DRD2. Inhibits signal transduction by increasing the GTPase activity of G protein alpha subunits, thereby driving them into their inactive GDP-bound form. Binds selectively to GNAZ and GNAI2 subunits, accelerates their GTPase activity and regulates their signaling activities. Negatively regulates mu-opioid receptor-mediated activation of the G-proteins. The sequence is that of Regulator of G-protein signaling 17 (Rgs17) from Mus musculus (Mouse).